Consider the following 135-residue polypeptide: MAVKIRLKRLGKIRAPYYRIVVADSRAKRDGRVIEEIGKYHPTEEPSFIEVQSERAQYWLSVGAQPTEQVEALLKLTGDWGRFKGDKDAVSTVRTREAKPAYVADEKKKPVLKPKTEKAAPEAAAPEAEATEEQA.

The span at aspartate 105 to alanine 120 shows a compositional bias: basic and acidic residues. The disordered stretch occupies residues aspartate 105–alanine 135.

It belongs to the bacterial ribosomal protein bS16 family.

The chain is Small ribosomal subunit protein bS16 from Clavibacter sepedonicus (Clavibacter michiganensis subsp. sepedonicus).